A 536-amino-acid polypeptide reads, in one-letter code: CTP synthase (536 aa).

The tract at residues 1–268 is amidoligase domain; the sequence is MSFKSIFLTG…VDFLLSKFGF (268 aa). Ser14 contributes to the CTP binding site. Ser14 contacts UTP. 15 to 20 is a binding site for ATP; it reads SLGKGL. L-glutamine is bound at residue Tyr55. Asp72 contacts ATP. Mg(2+) contacts are provided by Asp72 and Glu142. Residues 149–151, 188–193, and Lys224 contribute to the CTP site; these read DIE and KTKPTQ. Residues 188–193 and Lys224 each bind UTP; that span reads KTKPTQ. The Glutamine amidotransferase type-1 domain occupies 294–532; the sequence is RIGLVGKYLE…LSAALDYSLE (239 aa). Gly353 lines the L-glutamine pocket. Catalysis depends on Cys380, which acts as the Nucleophile; for glutamine hydrolysis. Residues 381-384, Glu404, and Arg460 each bind L-glutamine; that span reads LGMQ. Active-site residues include His505 and Glu507.

Belongs to the CTP synthase family. As to quaternary structure, homotetramer.

The catalysed reaction is UTP + L-glutamine + ATP + H2O = CTP + L-glutamate + ADP + phosphate + 2 H(+). The enzyme catalyses L-glutamine + H2O = L-glutamate + NH4(+). It catalyses the reaction UTP + NH4(+) + ATP = CTP + ADP + phosphate + 2 H(+). Its pathway is pyrimidine metabolism; CTP biosynthesis via de novo pathway; CTP from UDP: step 2/2. Allosterically activated by GTP, when glutamine is the substrate; GTP has no effect on the reaction when ammonia is the substrate. The allosteric effector GTP functions by stabilizing the protein conformation that binds the tetrahedral intermediate(s) formed during glutamine hydrolysis. Inhibited by the product CTP, via allosteric rather than competitive inhibition. In terms of biological role, catalyzes the ATP-dependent amination of UTP to CTP with either L-glutamine or ammonia as the source of nitrogen. Regulates intracellular CTP levels through interactions with the four ribonucleotide triphosphates. This is CTP synthase from Chlamydia muridarum (strain MoPn / Nigg).